A 671-amino-acid chain; its full sequence is Palmitoleoyl-protein carboxylesterase NOTUM (671 aa).

The signal sequence occupies residues 1–46 (MAVEQIDKMAAKAGEATNKWIKPQQPLLTLLLLLATFSQLPAVCSS). The N-linked (GlcNAc...) asparagine glycan is linked to Asn95. Catalysis depends on charge relay system residues Ser237 and Asp338. A glycan (N-linked (GlcNAc...) asparagine) is linked at Asn372. His384 (charge relay system) is an active-site residue. The interval 411–592 (HSTRSRRHDK…TKSKKRHRVP (182 aa)) is disordered. The segment covering 439 to 454 (NQRHQRHRQRLQRQKH) has biased composition (basic residues). Positions 470–486 (LSKEEREERKRLRQEQR) are enriched in basic and acidic residues. The segment covering 487-497 (QRRKQRRRQQQ) has biased composition (basic residues). A compositionally biased stretch (basic and acidic residues) spans 505-514 (QEHRNKKDNS). Residues 570–583 (PQKTRSSNNASAGT) show a composition bias toward polar residues. N-linked (GlcNAc...) asparagine glycosylation is found at Asn578 and Asn612.

The protein belongs to the pectinacetylesterase family. Notum subfamily.

It localises to the secreted. The protein localises to the cell surface. The catalysed reaction is [Wnt protein]-O-(9Z)-hexadecenoyl-L-serine + H2O = [Wnt protein]-L-serine + (9Z)-hexadecenoate + H(+). Its function is as follows. Carboxylesterase that acts as a key negative regulator of the Wnt signaling pathway by specifically mediating depalmitoleoylation of WNT proteins. Serine palmitoleoylation of WNT proteins is required for efficient binding to frizzled receptors. Also acts as a regulator of long-range activity of Hedgehog (hh), possibly by regulating the switch between low and high level hh pathway signaling. The polypeptide is Palmitoleoyl-protein carboxylesterase NOTUM (Drosophila melanogaster (Fruit fly)).